Reading from the N-terminus, the 388-residue chain is Cystathionine gamma-synthase (388 aa).

The disordered stretch occupies residues 1–24; sequence MSEDRTGHQGISGPATRAIHAGYR. Residue Lys-208 is modified to N6-(pyridoxal phosphate)lysine.

This sequence belongs to the trans-sulfuration enzymes family. Homotetramer. The cofactor is pyridoxal 5'-phosphate.

The protein localises to the cytoplasm. It catalyses the reaction O-succinyl-L-homoserine + L-cysteine = L,L-cystathionine + succinate + H(+). Functionally, catalyzes the formation of L-cystathionine from O-succinyl-L-homoserine (OSHS) and L-cysteine, via a gamma-replacement reaction. In the absence of thiol, catalyzes gamma-elimination to form 2-oxobutanoate, succinate and ammonia. This is Cystathionine gamma-synthase (metB) from Mycobacterium bovis (strain ATCC BAA-935 / AF2122/97).